The primary structure comprises 498 residues: Cytochrome P450 monooxygenase idtP (498 aa).

The N-terminal stretch at methionine 1–serine 20 is a signal peptide. Cysteine 439 contributes to the heme binding site.

This sequence belongs to the cytochrome P450 family. Heme serves as cofactor.

It functions in the pathway secondary metabolite biosynthesis. Its function is as follows. Cytochrome P450 monooxygenase; part of the gene cluster that mediates the biosynthesis of paspalitrems, indole-diterpene (IDT) mycotoxins that are potent tremorgens in mammals. The geranylgeranyl diphosphate (GGPP) synthase idtG is proposed to catalyze the first step in IDT biosynthesis via catalysis of a series of iterative condensations of isopentenyl diphosphate (IPP) with dimethylallyl diphosphate (DMAPP), geranyl diphosphate (GPP), and farnesyl diphosphate (FPP), to form GGPP. Condensation of indole-3-glycerol phosphate with GGPP by the prenyltransferase idtC then forms 3-geranylgeranylindole (3-GGI). Epoxidation of the two terminal alkenes of the geranylgeranyl moiety by the FAD-dependent monooxygenase idtM, and cyclization by the terpene cyclase idtB then leads to the production of paspaline. The cytochrome P450 monooxygenase idtP then catalyzes oxidative elimination of the pendant methyl group at C-12 of paspaline and generates the C-10 ketone to yield 13-desoxypaxilline. The cytochrome P450 monooxygenase idtQ may catalyze the C-13 oxidation of 13-desoxypaxilline to afford paxilline. Considering that both paspalicine and paxilline were detected in C.paspali, idtQ also catalyzes the formation of paspalinine from 13-desoxypaxilline via paspalicine as an intermediate. Finally, the alpha-prenyltransferase idtF prenylates paspalinine at the C-20 or the C-21 positions to yield paspalitrems A and C, respectively. The hydroxylation of paspalitrem A at C-32 by a still unknown oxidase affords paspalitrem B. This Claviceps paspali (Rye ergot fungus) protein is Cytochrome P450 monooxygenase idtP.